Here is an 86-residue protein sequence, read N- to C-terminus: Large ribosomal subunit protein eL43 (86 aa).

Residues 38–59 (CPVCGRKAVRRISTGIWQCQKC) form a C4-type zinc finger.

It belongs to the eukaryotic ribosomal protein eL43 family. Zn(2+) is required as a cofactor.

This chain is Large ribosomal subunit protein eL43, found in Thermococcus gammatolerans (strain DSM 15229 / JCM 11827 / EJ3).